The sequence spans 495 residues: Sialin (495 aa).

The span at 1 to 18 (MRSPVRDLARNDGEESTD) shows a compositional bias: basic and acidic residues. The segment at 1–24 (MRSPVRDLARNDGEESTDRTPLLP) is disordered. At 1 to 41 (MRSPVRDLARNDGEESTDRTPLLPGAPRAEAAPVCCSARYN) the chain is on the cytoplasmic side. S3 carries the post-translational modification Phosphoserine. The short motif at 22-23 (LL) is the Dileucine internalization motif element. Residues 42–62 (LAILAFFGFFIVYALRVNLSV) form a helical membrane-spanning segment. The Lumenal portion of the chain corresponds to 63-109 (ALVDMVDSNTTLEDNRTSKACPEHSAPIKVHHNQTGKKYQWDAETQG). 3 N-linked (GlcNAc...) asparagine glycosylation sites follow: N71, N77, and N95. The helical transmembrane segment at 110–130 (WILGSFFYGYIITQIPGGYVA) threads the bilayer. The Cytoplasmic portion of the chain corresponds to 131-136 (SKIGGK). The helical transmembrane segment at 137–157 (MLLGFGILGTAVLTLFTPIAA) threads the bilayer. A topological domain (lumenal) is located at residue D158. Residues 159–179 (LGVGPLIVLRALEGLGEGVTF) form a helical membrane-spanning segment. The Cytoplasmic portion of the chain corresponds to 180 to 200 (PAMHAMWSSWAPPLERSKLLS). The helical transmembrane segment at 201 to 221 (ISYAGAQLGTVISLPLSGIIC) threads the bilayer. The Lumenal portion of the chain corresponds to 222-227 (YYMNWT). The chain crosses the membrane as a helical span at residues 228–248 (YVFYFFGTIGIFWFLLWIWLV). Residues 249-279 (SDTPQKHKRISHYEKEYILSSLRNQLSSQKS) lie on the Cytoplasmic side of the membrane. A helical transmembrane segment spans residues 280–300 (VPWVPILKSLPLWAIVVAHFS). The Lumenal segment spans residues 301–328 (YNWTFYTLLTLLPTYMKEILRFNVQENG). The chain crosses the membrane as a helical span at residues 329-349 (FLSSLPYLGSWLCMILSGQAA). Over 350 to 365 (DNLRAKWNFSTLCVRR) the chain is Cytoplasmic. The helical transmembrane segment at 366–386 (IFSLIGMIGPAVFLVAAGFIG) threads the bilayer. The Lumenal portion of the chain corresponds to 387–391 (CDYSL). A helical membrane pass occupies residues 392-412 (AVAFLTISTTLGGFCSSGFSI). The Cytoplasmic segment spans residues 413–423 (NHLDIAPSYAG). Residues 424–444 (ILLGITNTFATIPGMVGPVIA) traverse the membrane as a helical segment. Residues 445–457 (KSLTPDNTVGEWQ) are Lumenal-facing. Residues 458–478 (TVFYIAAAINVFGAIFFTLFA) traverse the membrane as a helical segment. Residues 479 to 495 (KGEVQNWALNDHHGHRH) lie on the Cytoplasmic side of the membrane.

This sequence belongs to the major facilitator superfamily. Sodium/anion cotransporter family. As to expression, in the adult, detected in placenta, kidney and pancreas. Abundant in the endothelial cells of tumors from ovary, colon, breast and lung, but is not detected in endothelial cells from the corresponding normal tissues. Highly expressed in salivary glands and liver, with lower levels of expression in brain, spleen kidney, muscle and pancreas. Expressed in acinar cells of salivary glands (at protein level).

Its subcellular location is the basolateral cell membrane. The protein localises to the cytoplasmic vesicle. It localises to the secretory vesicle. It is found in the synaptic vesicle membrane. The protein resides in the lysosome membrane. It catalyses the reaction N-acetylneuraminate(in) + H(+)(in) = N-acetylneuraminate(out) + H(+)(out). It carries out the reaction D-glucuronate(out) + H(+)(out) = D-glucuronate(in) + H(+)(in). The catalysed reaction is 2 nitrate(out) + H(+)(out) = 2 nitrate(in) + H(+)(in). The enzyme catalyses L-aspartate(out) = L-aspartate(in). It catalyses the reaction L-glutamate(out) = L-glutamate(in). It carries out the reaction N-acetyl-L-aspartyl-L-glutamate(out) = N-acetyl-L-aspartyl-L-glutamate(in). Functionally, multifunctional anion transporter that operates via two distinct transport mechanisms, namely proton-coupled anion cotransport and membrane potential-dependent anion transport. Electroneutral proton-coupled acidic monosaccharide symporter, with a sugar to proton stoichiometry of 1:1. Exports glucuronic acid and free sialic acid derived from sialoglycoconjugate degradation out of lysosomes, driven by outwardly directed lysosomal pH gradient. May regulate lysosome function and metabolism of sialylated conjugates that impact oligodendrocyte lineage differentiation and myelinogenesis in the central nervous system. Electrogenic proton-coupled nitrate symporter that transports nitrate ions across the basolateral membrane of salivary gland acinar cells, with nitrate to proton stoichiometry of 2:1. May contribute to nitrate clearance from serum by salivary glands, where it is further concentrated and secreted in the saliva. Uses membrane potential to drive the uptake of acidic amino acids and peptides into synaptic vesicles. Responsible for synaptic vesicular storage of L-aspartate and L-glutamate in pinealocytes as well as vesicular uptake of N-acetyl-L-aspartyl-L-glutamate neuropeptide, relevant to aspartegic-associated glutamatergic neurotransmission and activation of metabotropic receptors that inhibit subsequent transmitter release. Its function is as follows. Receptor for CM101, a polysaccharide produced by group B Streptococcus with antipathoangiogenic properties. The chain is Sialin (SLC17A5) from Homo sapiens (Human).